Reading from the N-terminus, the 201-residue chain is Lipopolysaccharide core heptose(II)-phosphate phosphatase (201 aa).

The signal sequence occupies residues 1–35 (MLAFTLRFIKNKRYLATLAGALVIIAGLTSQHAWS).

It belongs to the phosphoglycerate mutase family. Ais subfamily.

It localises to the periplasm. It participates in bacterial outer membrane biogenesis; lipopolysaccharide metabolism. Its function is as follows. Catalyzes the dephosphorylation of heptose(II) of the outer membrane lipopolysaccharide core. The sequence is that of Lipopolysaccharide core heptose(II)-phosphate phosphatase from Salmonella heidelberg (strain SL476).